A 439-amino-acid polypeptide reads, in one-letter code: GTPase Obg (439 aa).

One can recognise an Obg domain in the interval I4–L162. The region spanning A163–K336 is the OBG-type G domain. GTP-binding positions include G169–S176, F194–V198, D218–G221, N288–D291, and S317–V319. Residues S176 and T196 each contribute to the Mg(2+) site. Residues L361–E439 enclose the OCT domain.

This sequence belongs to the TRAFAC class OBG-HflX-like GTPase superfamily. OBG GTPase family. Monomer. It depends on Mg(2+) as a cofactor.

The protein localises to the cytoplasm. Its function is as follows. An essential GTPase which binds GTP, GDP and possibly (p)ppGpp with moderate affinity, with high nucleotide exchange rates and a fairly low GTP hydrolysis rate. Plays a role in control of the cell cycle, stress response, ribosome biogenesis and in those bacteria that undergo differentiation, in morphogenesis control. The polypeptide is GTPase Obg (Fervidobacterium nodosum (strain ATCC 35602 / DSM 5306 / Rt17-B1)).